Here is a 685-residue protein sequence, read N- to C-terminus: DNA ligase (685 aa).

NAD(+) contacts are provided by residues 47–51, 96–97, and E125; these read DSEYD and SL. Catalysis depends on K127, which acts as the N6-AMP-lysine intermediate. Positions 148, 185, 304, and 328 each coordinate NAD(+). 4 residues coordinate Zn(2+): C422, C425, C440, and C446. The BRCT domain occupies 605-685; that stretch reads ADAQPLKGQT…ELLALLAANA (81 aa).

It belongs to the NAD-dependent DNA ligase family. LigA subfamily. It depends on Mg(2+) as a cofactor. Mn(2+) is required as a cofactor.

The enzyme catalyses NAD(+) + (deoxyribonucleotide)n-3'-hydroxyl + 5'-phospho-(deoxyribonucleotide)m = (deoxyribonucleotide)n+m + AMP + beta-nicotinamide D-nucleotide.. In terms of biological role, DNA ligase that catalyzes the formation of phosphodiester linkages between 5'-phosphoryl and 3'-hydroxyl groups in double-stranded DNA using NAD as a coenzyme and as the energy source for the reaction. It is essential for DNA replication and repair of damaged DNA. The protein is DNA ligase of Shewanella baltica (strain OS195).